We begin with the raw amino-acid sequence, 930 residues long: Alanine--tRNA ligase (930 aa).

Zn(2+)-binding residues include His595, His599, Cys700, and His704.

The protein belongs to the class-II aminoacyl-tRNA synthetase family. Zn(2+) is required as a cofactor.

The protein localises to the cytoplasm. The catalysed reaction is tRNA(Ala) + L-alanine + ATP = L-alanyl-tRNA(Ala) + AMP + diphosphate. Functionally, catalyzes the attachment of alanine to tRNA(Ala) in a two-step reaction: alanine is first activated by ATP to form Ala-AMP and then transferred to the acceptor end of tRNA(Ala). Also edits incorrectly charged Ser-tRNA(Ala) and Gly-tRNA(Ala) via its editing domain. The sequence is that of Alanine--tRNA ligase from Malacoplasma penetrans (strain HF-2) (Mycoplasma penetrans).